Consider the following 69-residue polypeptide: DNA gyrase inhibitor YacG (69 aa).

The tract at residues 1–28 is disordered; that stretch reads MSGEGKKHGSNVEPLRPTRPCPECGRPS. 4 residues coordinate Zn(2+): C21, C24, C36, and C40.

Belongs to the DNA gyrase inhibitor YacG family. In terms of assembly, interacts with GyrB. Zn(2+) serves as cofactor.

Its function is as follows. Inhibits all the catalytic activities of DNA gyrase by preventing its interaction with DNA. Acts by binding directly to the C-terminal domain of GyrB, which probably disrupts DNA binding by the gyrase. The protein is DNA gyrase inhibitor YacG of Sinorhizobium fredii (strain NBRC 101917 / NGR234).